We begin with the raw amino-acid sequence, 72 residues long: Translation initiation factor IF-1 (72 aa).

One can recognise an S1-like domain in the interval 1 to 72 (MAKEGAIEVE…TRGRIVYRYK (72 aa)).

Belongs to the IF-1 family. Component of the 30S ribosomal translation pre-initiation complex which assembles on the 30S ribosome in the order IF-2 and IF-3, IF-1 and N-formylmethionyl-tRNA(fMet); mRNA recruitment can occur at any time during PIC assembly.

Its subcellular location is the cytoplasm. Its function is as follows. One of the essential components for the initiation of protein synthesis. Stabilizes the binding of IF-2 and IF-3 on the 30S subunit to which N-formylmethionyl-tRNA(fMet) subsequently binds. Helps modulate mRNA selection, yielding the 30S pre-initiation complex (PIC). Upon addition of the 50S ribosomal subunit IF-1, IF-2 and IF-3 are released leaving the mature 70S translation initiation complex. In Corynebacterium glutamicum (strain R), this protein is Translation initiation factor IF-1.